The following is a 158-amino-acid chain: Small ribosomal subunit protein uS9 (158 aa).

It belongs to the universal ribosomal protein uS9 family.

This chain is Small ribosomal subunit protein uS9, found in Brucella melitensis biotype 1 (strain ATCC 23456 / CCUG 17765 / NCTC 10094 / 16M).